A 460-amino-acid chain; its full sequence is Bifunctional protein GlmU (460 aa).

The pyrophosphorylase stretch occupies residues 1-237 (MSSNQYTAGA…DPDLLGVNTP (237 aa)). Residues 13–16 (LAAG), Lys-27, Gln-78, and 83–84 (GT) contribute to the UDP-N-acetyl-alpha-D-glucosamine site. Asp-109 is a binding site for Mg(2+). 4 residues coordinate UDP-N-acetyl-alpha-D-glucosamine: Gly-146, Glu-160, Asn-177, and Asn-235. Residue Asn-235 participates in Mg(2+) binding. The linker stretch occupies residues 238–258 (AELMRSEELLRENIVTRHLHN). Positions 259 to 460 (GVHVHAAGSV…QKNLRKTRHS (202 aa)) are N-acetyltransferase. Arg-341 and Lys-359 together coordinate UDP-N-acetyl-alpha-D-glucosamine. The Proton acceptor role is filled by His-371. The UDP-N-acetyl-alpha-D-glucosamine site is built by Tyr-374 and Asn-385. Acetyl-CoA-binding positions include Ala-388, 394 to 395 (NY), Ser-413, Ala-431, and Arg-448.

In the N-terminal section; belongs to the N-acetylglucosamine-1-phosphate uridyltransferase family. The protein in the C-terminal section; belongs to the transferase hexapeptide repeat family. In terms of assembly, homotrimer. Mg(2+) is required as a cofactor.

The protein resides in the cytoplasm. It catalyses the reaction alpha-D-glucosamine 1-phosphate + acetyl-CoA = N-acetyl-alpha-D-glucosamine 1-phosphate + CoA + H(+). The enzyme catalyses N-acetyl-alpha-D-glucosamine 1-phosphate + UTP + H(+) = UDP-N-acetyl-alpha-D-glucosamine + diphosphate. The protein operates within nucleotide-sugar biosynthesis; UDP-N-acetyl-alpha-D-glucosamine biosynthesis; N-acetyl-alpha-D-glucosamine 1-phosphate from alpha-D-glucosamine 6-phosphate (route II): step 2/2. It functions in the pathway nucleotide-sugar biosynthesis; UDP-N-acetyl-alpha-D-glucosamine biosynthesis; UDP-N-acetyl-alpha-D-glucosamine from N-acetyl-alpha-D-glucosamine 1-phosphate: step 1/1. It participates in bacterial outer membrane biogenesis; LPS lipid A biosynthesis. In terms of biological role, catalyzes the last two sequential reactions in the de novo biosynthetic pathway for UDP-N-acetylglucosamine (UDP-GlcNAc). The C-terminal domain catalyzes the transfer of acetyl group from acetyl coenzyme A to glucosamine-1-phosphate (GlcN-1-P) to produce N-acetylglucosamine-1-phosphate (GlcNAc-1-P), which is converted into UDP-GlcNAc by the transfer of uridine 5-monophosphate (from uridine 5-triphosphate), a reaction catalyzed by the N-terminal domain. The sequence is that of Bifunctional protein GlmU from Oleidesulfovibrio alaskensis (strain ATCC BAA-1058 / DSM 17464 / G20) (Desulfovibrio alaskensis).